A 67-amino-acid polypeptide reads, in one-letter code: Large ribosomal subunit protein uL29 (67 aa).

Belongs to the universal ribosomal protein uL29 family.

The polypeptide is Large ribosomal subunit protein uL29 (Zymomonas mobilis subsp. mobilis (strain ATCC 31821 / ZM4 / CP4)).